Reading from the N-terminus, the 406-residue chain is Tyrosine--tRNA ligase (406 aa).

An L-tyrosine-binding site is contributed by Tyr-35. The short motif at 40–49 is the 'HIGH' region element; the sequence is PTADSLHVGH. 2 residues coordinate L-tyrosine: Tyr-168 and Gln-172. The short motif at 228–232 is the 'KMSKS' region element; it reads KMGKT. ATP is bound at residue Lys-231. One can recognise an S4 RNA-binding domain in the interval 340–404; it reads SELLDILVEA…RGKKNYNKIV (65 aa).

This sequence belongs to the class-I aminoacyl-tRNA synthetase family. TyrS type 1 subfamily. As to quaternary structure, homodimer.

The protein localises to the cytoplasm. It catalyses the reaction tRNA(Tyr) + L-tyrosine + ATP = L-tyrosyl-tRNA(Tyr) + AMP + diphosphate + H(+). Catalyzes the attachment of tyrosine to tRNA(Tyr) in a two-step reaction: tyrosine is first activated by ATP to form Tyr-AMP and then transferred to the acceptor end of tRNA(Tyr). This is Tyrosine--tRNA ligase from Clostridium perfringens (strain ATCC 13124 / DSM 756 / JCM 1290 / NCIMB 6125 / NCTC 8237 / Type A).